Consider the following 962-residue polypeptide: UPF0182 protein SACE_1102 (962 aa).

The next 7 helical transmembrane spans lie at 10–30 (ILLI…RLLG), 55–75 (LGLG…NLWI), 106–126 (LFGW…AQSD), 168–188 (FVAI…FGGI), 203–223 (IQLS…YFLD), 250–270 (VKLI…AAIF), and 279–299 (IATV…PALL). Disordered stretches follow at residues 707 to 730 (RTFW…GNQQ) and 876 to 916 (FGPG…EMTK). Pro residues predominate over residues 899-910 (GQQPPTQQPPAG).

It belongs to the UPF0182 family.

It is found in the cell membrane. The chain is UPF0182 protein SACE_1102 from Saccharopolyspora erythraea (strain ATCC 11635 / DSM 40517 / JCM 4748 / NBRC 13426 / NCIMB 8594 / NRRL 2338).